The chain runs to 258 residues: Protease HtpX homolog (258 aa).

The next 2 membrane-spanning stretches (helical) occupy residues 24–44 (VLLFGLIYAILMVVGSILGLG) and 45–65 (GPLFYALLGFGVIFLQYLISP). H146 is a binding site for Zn(2+). E147 is a catalytic residue. H150 contacts Zn(2+). The next 2 helical transmembrane spans lie at 157–177 (IVMTLVSAVPLICYYIFWSTV) and 186–206 (LVGIAALIAYFIGQLIVLFIS). E210 lines the Zn(2+) pocket.

The protein belongs to the peptidase M48B family. Requires Zn(2+) as cofactor.

It localises to the cell membrane. The chain is Protease HtpX homolog from Methanothermobacter thermautotrophicus (strain ATCC 29096 / DSM 1053 / JCM 10044 / NBRC 100330 / Delta H) (Methanobacterium thermoautotrophicum).